Reading from the N-terminus, the 379-residue chain is UDP-4-amino-4-deoxy-L-arabinose--oxoglutarate aminotransferase (379 aa).

Lysine 182 bears the N6-(pyridoxal phosphate)lysine mark.

It belongs to the DegT/DnrJ/EryC1 family. ArnB subfamily. Homodimer. Pyridoxal 5'-phosphate serves as cofactor.

It carries out the reaction UDP-4-amino-4-deoxy-beta-L-arabinose + 2-oxoglutarate = UDP-beta-L-threo-pentopyranos-4-ulose + L-glutamate. It participates in nucleotide-sugar biosynthesis; UDP-4-deoxy-4-formamido-beta-L-arabinose biosynthesis; UDP-4-deoxy-4-formamido-beta-L-arabinose from UDP-alpha-D-glucuronate: step 2/3. It functions in the pathway bacterial outer membrane biogenesis; lipopolysaccharide biosynthesis. In terms of biological role, catalyzes the conversion of UDP-4-keto-arabinose (UDP-Ara4O) to UDP-4-amino-4-deoxy-L-arabinose (UDP-L-Ara4N). The modified arabinose is attached to lipid A and is required for resistance to polymyxin and cationic antimicrobial peptides. The protein is UDP-4-amino-4-deoxy-L-arabinose--oxoglutarate aminotransferase of Escherichia coli O81 (strain ED1a).